Here is a 411-residue protein sequence, read N- to C-terminus: Arginase (411 aa).

The segment at asparagine 83–asparagine 106 is disordered. Mn(2+) is bound by residues histidine 193, aspartate 216, histidine 218, and aspartate 220. Asparagine 222, serine 229, and aspartate 274 together coordinate L-arginine. Aspartate 323 and aspartate 325 together coordinate Mn(2+).

The protein belongs to the arginase family. Homotrimer; oligomerization is dependent on Mn(2+) binding. It depends on Mn(2+) as a cofactor.

It carries out the reaction L-arginine + H2O = urea + L-ornithine. The protein operates within nitrogen metabolism; urea cycle; L-ornithine and urea from L-arginine: step 1/1. Feedback inhibition by product L-ornithine,. Inhibited by 2(S)-amino-6-boronohexanoic acid (ABH); however, with less efficiency than human ARG1. Functionally, catalyzes the hydrolysis of L-arginine into urea and L-ornithine, which is a precursor for polyamine biosynthesis. May play a role in parasite intra-hepatic development during the host liver stage. The sequence is that of Arginase from Plasmodium falciparum (isolate 3D7).